A 296-amino-acid polypeptide reads, in one-letter code: Elongation factor Ts (296 aa).

The interval 82 to 85 is involved in Mg(2+) ion dislocation from EF-Tu; it reads TDFV.

It belongs to the EF-Ts family.

It is found in the cytoplasm. Associates with the EF-Tu.GDP complex and induces the exchange of GDP to GTP. It remains bound to the aminoacyl-tRNA.EF-Tu.GTP complex up to the GTP hydrolysis stage on the ribosome. The sequence is that of Elongation factor Ts from Coxiella burnetii (strain CbuG_Q212) (Coxiella burnetii (strain Q212)).